The sequence spans 145 residues: UPF0735 ACT domain-containing protein CLL_A2896 (145 aa).

The region spanning 69–144 is the ACT domain; the sequence is TFNLIVKDQT…YVEKIEFVAM (76 aa).

Belongs to the UPF0735 family.

The sequence is that of UPF0735 ACT domain-containing protein CLL_A2896 from Clostridium botulinum (strain Eklund 17B / Type B).